The primary structure comprises 70 residues: Sporulation protein YhaL (70 aa).

The chain crosses the membrane as a helical span at residues Phe-3–Val-23. The tract at residues Met-48–Ala-70 is disordered.

It is found in the cell membrane. Its function is as follows. Required for efficient sporulation. This chain is Sporulation protein YhaL (yhaL), found in Bacillus subtilis (strain 168).